The chain runs to 48 residues: ATP synthase protein 8 (48 aa).

Residues 4–24 (LVPFFFVNQVVFAFIVLTVLI) form a helical membrane-spanning segment.

It belongs to the ATPase protein 8 family. In terms of assembly, F-type ATPases have 2 components, CF(1) - the catalytic core - and CF(0) - the membrane proton channel.

The protein localises to the mitochondrion membrane. Its function is as follows. Mitochondrial membrane ATP synthase (F(1)F(0) ATP synthase or Complex V) produces ATP from ADP in the presence of a proton gradient across the membrane which is generated by electron transport complexes of the respiratory chain. F-type ATPases consist of two structural domains, F(1) - containing the extramembraneous catalytic core and F(0) - containing the membrane proton channel, linked together by a central stalk and a peripheral stalk. During catalysis, ATP synthesis in the catalytic domain of F(1) is coupled via a rotary mechanism of the central stalk subunits to proton translocation. Part of the complex F(0) domain. Minor subunit located with subunit a in the membrane. This Emericella nidulans (Aspergillus nidulans) protein is ATP synthase protein 8 (atp8).